The sequence spans 452 residues: GTPase Der (452 aa).

EngA-type G domains are found at residues 4–169 (PIVA…PPPE) and 177–352 (IKVA…EEHR). GTP-binding positions include 10-17 (GRPNVGKS), 57-61 (DTGGL), 120-123 (NKCE), 183-190 (GRPNVGKS), 230-234 (DTAGI), and 295-298 (NKWD). In terms of domain architecture, KH-like spans 353–438 (RRVTTAVINE…PIRLLWRGKK (86 aa)).

The protein belongs to the TRAFAC class TrmE-Era-EngA-EngB-Septin-like GTPase superfamily. EngA (Der) GTPase family. Associates with the 50S ribosomal subunit.

GTPase that plays an essential role in the late steps of ribosome biogenesis. This chain is GTPase Der, found in Rippkaea orientalis (strain PCC 8801 / RF-1) (Cyanothece sp. (strain PCC 8801)).